The sequence spans 410 residues: Succinyl-CoA:(R)-benzylsuccinate CoA-transferase subunit BbsE (410 aa).

It belongs to the CoA-transferase III family. As to quaternary structure, heterotetramer composed of 2 BbsE subunits and 2 BbsF subunits.

The catalysed reaction is (R)-2-benzylsuccinate + succinyl-CoA = (R)-2-benzylsuccinyl-CoA + succinate. It functions in the pathway xenobiotic degradation; toluene degradation. Inhibited by (S)-benzylsuccinyl-CoA. In terms of biological role, catalyzes the reversible conversion of (R)-2-benzylsuccinate to (R)-2-benzylsuccinyl-CoA. Inactive with (S)-benzylsuccinate. This Thauera aromatica protein is Succinyl-CoA:(R)-benzylsuccinate CoA-transferase subunit BbsE (bbsE).